The following is a 412-amino-acid chain: Probable inactive allantoicase (412 aa).

Belongs to the allantoicase family.

Functionally, the function of this enzyme is unclear as allantoicase activity is not known to exist in mammals. This is Probable inactive allantoicase (ALLC) from Bos taurus (Bovine).